The chain runs to 688 residues: Transcriptional regulatory protein GAT1 (688 aa).

Disordered stretches follow at residues 83-125, 259-278, 343-438, 482-565, and 639-678; these read NHNS…SPMI, TSAS…NNSS, FTGI…GVSC, IKKR…NLDK, and LMTM…TANN. Residues 259–271 are compositionally biased toward low complexity; that stretch reads TSASITSPTSTFS. Over residues 359 to 368 the composition is skewed to basic and acidic residues; sequence FDNKPKDDHF. A compositionally biased stretch (polar residues) spans 369–379; sequence NTSLSVSQQQP. Basic residues predominate over residues 382–397; sequence KKSKRKSTITKSKKKA. Low complexity predominate over residues 402–428; the sequence is TTITSTGSTITTKSTNSNSTGKGTATG. The GATA-type zinc finger occupies 438-462; sequence CTNCGTKTTPLWRRNPQGQPLCNAC. 5 stretches are compositionally biased toward low complexity: residues 488–510, 529–543, 552–565, 639–654, and 662–678; these read GNNN…NNKS, TNNT…SKSP, FDNN…NLDK, LMTM…LSTT, and NNEG…TANN.

The protein resides in the nucleus. In terms of biological role, transcriptional regulator of nitrogen utilization required for nitrogen catabolite repression and utilization of isoleucine, tyrosine and tryptophan as nitrogen sources. Controls expression of the MEP2 ammonium permease, the DUR1,2 urea amidolyase, and the transcription factor STP1, which in turn mediates SAP2 expression, a long-known virulence attribute of C.albicans. Influences the filamentation process depending upon the nitrogen sources available. Required for virulence in a mouse systemic infection model. This chain is Transcriptional regulatory protein GAT1 (GAT1), found in Candida albicans (strain SC5314 / ATCC MYA-2876) (Yeast).